We begin with the raw amino-acid sequence, 278 residues long: Secreted RxLR effector protein 151 (278 aa).

An N-terminal signal peptide occupies residues 1–18; the sequence is MRNRAVLFGLFFIGYSSC. Residues 49 to 64 carry the RxLR-dEER motif; the sequence is RLLQVDGPKRILAEER.

This sequence belongs to the RxLR effector family.

It localises to the secreted. Its subcellular location is the host endoplasmic reticulum membrane. Secreted effector that completely suppresses the host cell death induced by cell death-inducing proteins. The protein is Secreted RxLR effector protein 151 of Plasmopara viticola (Downy mildew of grapevine).